The sequence spans 242 residues: ATP synthase subunit a (242 aa).

6 helical membrane-spanning segments follow: residues 29 to 49 (SSIY…LAFY), 84 to 104 (FIPL…LGMT), 114 to 134 (IIVT…VGFI), 140 to 160 (FLTL…MIVI), 181 to 201 (MAGH…MIYL), and 203 to 223 (FLPI…AILQ).

The protein belongs to the ATPase A chain family. In terms of assembly, F-type ATPases have 2 components, CF(1) - the catalytic core - and CF(0) - the membrane proton channel. CF(1) has five subunits: alpha(3), beta(3), gamma(1), delta(1), epsilon(1). CF(0) has three main subunits: a(1), b(2) and c(9-12). The alpha and beta chains form an alternating ring which encloses part of the gamma chain. CF(1) is attached to CF(0) by a central stalk formed by the gamma and epsilon chains, while a peripheral stalk is formed by the delta and b chains.

It is found in the cell inner membrane. Its function is as follows. Key component of the proton channel; it plays a direct role in the translocation of protons across the membrane. The chain is ATP synthase subunit a from Rickettsia typhi (strain ATCC VR-144 / Wilmington).